Consider the following 369-residue polypeptide: Saccharopine dehydrogenase [NAD(+), L-lysine-forming] (369 aa).

2 residues coordinate L-saccharopine: R19 and K78. The active-site Proton acceptor is the K78. The active-site Proton donor is H96. Residue Q101 participates in L-saccharopine binding. R130 provides a ligand contact to NAD(+). L-saccharopine contacts are provided by R131 and F135. Residues 203-204 (GR), D227, T231, Y251, and V278 each bind NAD(+). C205 and C249 are joined by a disulfide. 279-281 (SAD) contributes to the L-saccharopine binding site. 318-321 (IDHL) lines the NAD(+) pocket.

The protein belongs to the AlaDH/PNT family. In terms of assembly, monomer.

The catalysed reaction is L-saccharopine + NAD(+) + H2O = L-lysine + 2-oxoglutarate + NADH + H(+). Its pathway is amino-acid biosynthesis; L-lysine biosynthesis via AAA pathway; L-lysine from L-alpha-aminoadipate (fungal route): step 3/3. Its function is as follows. Catalyzes the NAD(+)-dependent cleavage of saccharopine to L-lysine and 2-oxoglutarate, the final step in the alpha-aminoadipate (AAA) pathway for lysin biosynthesis. This is Saccharopine dehydrogenase [NAD(+), L-lysine-forming] from Yarrowia lipolytica (strain CLIB 122 / E 150) (Yeast).